The sequence spans 583 residues: 2-succinyl-5-enolpyruvyl-6-hydroxy-3-cyclohexene-1-carboxylate synthase (583 aa).

Belongs to the TPP enzyme family. MenD subfamily. Homodimer. It depends on Mg(2+) as a cofactor. The cofactor is Mn(2+). Thiamine diphosphate serves as cofactor.

The enzyme catalyses isochorismate + 2-oxoglutarate + H(+) = 5-enolpyruvoyl-6-hydroxy-2-succinyl-cyclohex-3-ene-1-carboxylate + CO2. The protein operates within quinol/quinone metabolism; 1,4-dihydroxy-2-naphthoate biosynthesis; 1,4-dihydroxy-2-naphthoate from chorismate: step 2/7. It participates in cofactor biosynthesis; phylloquinone biosynthesis. In terms of biological role, catalyzes the thiamine diphosphate-dependent decarboxylation of 2-oxoglutarate and the subsequent addition of the resulting succinic semialdehyde-thiamine pyrophosphate anion to isochorismate to yield 2-succinyl-5-enolpyruvyl-6-hydroxy-3-cyclohexene-1-carboxylate (SEPHCHC). This Trichormus variabilis (strain ATCC 29413 / PCC 7937) (Anabaena variabilis) protein is 2-succinyl-5-enolpyruvyl-6-hydroxy-3-cyclohexene-1-carboxylate synthase.